Consider the following 303-residue polypeptide: Pantothenate synthetase (303 aa).

The tract at residues 1-21 (MIATGHGGAERRTTAGDGTAR) is disordered. An ATP-binding site is contributed by 48 to 55 (MGALHDGH). Histidine 55 acts as the Proton donor in catalysis. Residue glutamine 79 participates in (R)-pantoate binding. Glutamine 79 is a beta-alanine binding site. 165–168 (GRKD) is a binding site for ATP. A (R)-pantoate-binding site is contributed by glutamine 171. 202–205 (ASSR) contacts ATP.

The protein belongs to the pantothenate synthetase family. In terms of assembly, homodimer.

Its subcellular location is the cytoplasm. It catalyses the reaction (R)-pantoate + beta-alanine + ATP = (R)-pantothenate + AMP + diphosphate + H(+). The protein operates within cofactor biosynthesis; (R)-pantothenate biosynthesis; (R)-pantothenate from (R)-pantoate and beta-alanine: step 1/1. Its function is as follows. Catalyzes the condensation of pantoate with beta-alanine in an ATP-dependent reaction via a pantoyl-adenylate intermediate. The chain is Pantothenate synthetase from Acidothermus cellulolyticus (strain ATCC 43068 / DSM 8971 / 11B).